We begin with the raw amino-acid sequence, 289 residues long: Protease HtpX homolog (289 aa).

2 consecutive transmembrane segments (helical) span residues 8–28 (LALL…VIGG) and 29–49 (SSGL…SWYQ). Position 132 (histidine 132) interacts with Zn(2+). Residue glutamate 133 is part of the active site. Histidine 136 provides a ligand contact to Zn(2+). 2 helical membrane-spanning segments follow: residues 151-171 (VAGA…FGGI) and 183-203 (LGVL…QLAI). Glutamate 208 lines the Zn(2+) pocket.

Belongs to the peptidase M48B family. Zn(2+) is required as a cofactor.

It is found in the cell inner membrane. The chain is Protease HtpX homolog from Trichormus variabilis (strain ATCC 29413 / PCC 7937) (Anabaena variabilis).